Consider the following 485-residue polypeptide: DNA polymerase subunit gamma-2 (485 aa).

Residues 28-67 (RQPEQLSKGTGSFVGPVRSQAELPRNEPREAPESGGEGSE) are disordered.

Heterotrimer composed of a catalytic subunit and a homodimer of accessory subunits (POLG:POLG2).

It localises to the mitochondrion. The protein localises to the mitochondrion matrix. Its subcellular location is the mitochondrion nucleoid. Its function is as follows. Accessory subunit of DNA polymerase gamma solely responsible for replication of mitochondrial DNA (mtDNA). Acts as an allosteric regulator of the holoenzyme activities. Enhances the polymerase activity and the processivity of POLG by increasing its interactions with the DNA template. Suppresses POLG exonucleolytic proofreading especially toward homopolymeric templates bearing mismatched termini. Binds to single-stranded DNA. This Bos taurus (Bovine) protein is DNA polymerase subunit gamma-2 (POLG2).